The following is a 386-amino-acid chain: Probable Xaa-Pro aminopeptidase PMAA_074180 (386 aa).

Mn(2+)-binding residues include aspartate 160, aspartate 171, glutamate 311, and glutamate 350.

This sequence belongs to the peptidase M24B family. The cofactor is Mn(2+).

It carries out the reaction Release of any N-terminal amino acid, including proline, that is linked to proline, even from a dipeptide or tripeptide.. Functionally, catalyzes the removal of a penultimate prolyl residue from the N-termini of peptides. The polypeptide is Probable Xaa-Pro aminopeptidase PMAA_074180 (Talaromyces marneffei (strain ATCC 18224 / CBS 334.59 / QM 7333) (Penicillium marneffei)).